A 583-amino-acid chain; its full sequence is Radixin (583 aa).

Residues 5–295 (INVRVTTMDA…GNHELYMRRR (291 aa)) form the FERM domain. Residues 60–63 (KLNK) and Lys-278 each bind a 1,2-diacyl-sn-glycero-3-phospho-(1D-myo-inositol). Disordered stretches follow at residues 310–336 (REEK…AEKE) and 436–527 (KKKE…VKKQ). Composition is skewed to basic and acidic residues over residues 436 to 447 (KKKEEEASEWQH) and 455 to 464 (DLEKTKEELK). The segment covering 469–480 (APPPPPPPPVIP) has biased composition (pro residues). 2 stretches are compositionally biased toward basic and acidic residues: residues 483 to 492 (ENEHDEHDEN) and 506 to 525 (MNHR…ERVK).

The protein resides in the cell membrane. The protein localises to the cytoplasm. It is found in the cytoskeleton. Probably plays a crucial role in the binding of the barbed end of actin filaments to the plasma membrane. This chain is Radixin (RDX), found in Gallus gallus (Chicken).